Reading from the N-terminus, the 263-residue chain is Ribonuclease HII (263 aa).

Positions 71–262 (QAIAGIDEVG…VKSMCCDSTN (192 aa)) constitute an RNase H type-2 domain. A divalent metal cation is bound by residues aspartate 77, glutamate 78, and aspartate 172.

This sequence belongs to the RNase HII family. Mn(2+) serves as cofactor. It depends on Mg(2+) as a cofactor.

It localises to the cytoplasm. The enzyme catalyses Endonucleolytic cleavage to 5'-phosphomonoester.. Endonuclease that specifically degrades the RNA of RNA-DNA hybrids. This chain is Ribonuclease HII, found in Streptococcus pyogenes serotype M4 (strain MGAS10750).